The sequence spans 123 residues: Large ribosomal subunit protein uL14 (123 aa).

It belongs to the universal ribosomal protein uL14 family. Part of the 50S ribosomal subunit. Forms a cluster with proteins L3 and L19. In the 70S ribosome, L14 and L19 interact and together make contacts with the 16S rRNA in bridges B5 and B8.

In terms of biological role, binds to 23S rRNA. Forms part of two intersubunit bridges in the 70S ribosome. The polypeptide is Large ribosomal subunit protein uL14 (Serratia proteamaculans (strain 568)).